The primary structure comprises 379 residues: Cytochrome b (379 aa).

A run of 4 helical transmembrane segments spans residues 34–54, 78–99, 114–134, and 179–199; these read FGSL…FLAM, WLIR…YLHI, WNTG…GYVL, and FFTF…VHLL. Positions 84 and 98 each coordinate heme b. 2 residues coordinate heme b: histidine 183 and histidine 197. Histidine 202 serves as a coordination point for a ubiquinone. 4 helical membrane-spanning segments follow: residues 227-247, 289-309, 321-341, and 348-368; these read YKDL…TLFY, LGGV…PTLH, LTQT…WIGG, and FITI…ILMP.

It belongs to the cytochrome b family. The cytochrome bc1 complex contains 3 respiratory subunits (MT-CYB, CYC1 and UQCRFS1), 2 core proteins (UQCRC1 and UQCRC2) and probably 6 low-molecular weight proteins. It depends on heme b as a cofactor.

The protein resides in the mitochondrion inner membrane. Functionally, component of the ubiquinol-cytochrome c reductase complex (complex III or cytochrome b-c1 complex) that is part of the mitochondrial respiratory chain. The b-c1 complex mediates electron transfer from ubiquinol to cytochrome c. Contributes to the generation of a proton gradient across the mitochondrial membrane that is then used for ATP synthesis. This chain is Cytochrome b (MT-CYB), found in Glyptemys muhlenbergii (Bog turtle).